The chain runs to 129 residues: Small ribosomal subunit protein bS18c (129 aa).

The disordered stretch occupies residues 1 to 20; that stretch reads MGTSNTQKPQKQVPKRKKYK.

This sequence belongs to the bacterial ribosomal protein bS18 family. As to quaternary structure, part of the 30S ribosomal subunit.

The protein localises to the plastid. The protein resides in the chloroplast. This is Small ribosomal subunit protein bS18c from Stigeoclonium helveticum (Green alga).